The chain runs to 93 residues: Small ribosomal subunit protein uS19 (93 aa).

Belongs to the universal ribosomal protein uS19 family.

Its function is as follows. Protein S19 forms a complex with S13 that binds strongly to the 16S ribosomal RNA. The protein is Small ribosomal subunit protein uS19 of Karelsulcia muelleri (strain GWSS) (Sulcia muelleri).